The following is a 43-amino-acid chain: Photosystem II reaction center protein Y (43 aa).

The helical transmembrane segment at 8–26 (LFLVVAPILAAVSWAAFNI) threads the bilayer.

The protein belongs to the PsbY family. In terms of assembly, PSII is composed of 1 copy each of membrane proteins PsbA, PsbB, PsbC, PsbD, PsbE, PsbF, PsbH, PsbI, PsbJ, PsbK, PsbL, PsbM, PsbT, PsbX, PsbY, PsbZ, Psb30/Ycf12, peripheral proteins PsbO, CyanoQ (PsbQ), PsbU, PsbV and a large number of cofactors. It forms dimeric complexes.

The protein localises to the cellular thylakoid membrane. Its function is as follows. Loosely associated component of the core of photosystem II (PSII), it is not always seen in crystals. PSII is a light-driven water plastoquinone oxidoreductase, using light energy to abstract electrons from H(2)O, generating a proton gradient subsequently used for ATP formation. This chain is Photosystem II reaction center protein Y, found in Parasynechococcus marenigrum (strain WH8102).